The sequence spans 265 residues: MKIGFFDSGIGGMTVLYEAIKVLPYEDYIFYADTLNVPYGEKSKGKVKEYIFNAAEFLASQNIKALVIACNTATSIAIEDLRRNFDFPIIGIEPAVKPAINKCTEERKRVLVVATNLTLKEEKFHNLVKEIDHHDLVDCLALPGLVEFAENFDFSEDKIIKYLKNELSSFDLKQYGTIVLGCTHFPFFKNSFEKLFGIKVDMISGSVGTAKQLKKVLADRNQLGKGSGSITFFNSGHKIVDQEVISKYKRLFEILDETQRSHVGH.

Substrate is bound by residues 7-8 (DS) and 39-40 (YG). Cys70 functions as the Proton donor/acceptor in the catalytic mechanism. 71–72 (NT) contacts substrate. Residue Cys182 is the Proton donor/acceptor of the active site. 183-184 (TH) provides a ligand contact to substrate.

Belongs to the aspartate/glutamate racemases family.

It catalyses the reaction L-glutamate = D-glutamate. It participates in cell wall biogenesis; peptidoglycan biosynthesis. Provides the (R)-glutamate required for cell wall biosynthesis. This is Glutamate racemase 2 (yrpC) from Bacillus subtilis (strain 168).